The primary structure comprises 90 residues: Small ribosomal subunit protein uS17 (90 aa).

This sequence belongs to the universal ribosomal protein uS17 family. In terms of assembly, part of the 30S ribosomal subunit.

In terms of biological role, one of the primary rRNA binding proteins, it binds specifically to the 5'-end of 16S ribosomal RNA. The sequence is that of Small ribosomal subunit protein uS17 from Acidiphilium cryptum (strain JF-5).